A 557-amino-acid chain; its full sequence is Chaperonin GroEL 1 (557 aa).

ATP contacts are provided by residues 29–32, Lys-50, 86–90, Gly-416, and Asp-495; these read TLGP and DGTTT.

Belongs to the chaperonin (HSP60) family. In terms of assembly, forms a cylinder of 14 subunits composed of two heptameric rings stacked back-to-back. Interacts with the co-chaperonin GroES.

It is found in the cytoplasm. The catalysed reaction is ATP + H2O + a folded polypeptide = ADP + phosphate + an unfolded polypeptide.. Together with its co-chaperonin GroES, plays an essential role in assisting protein folding. The GroEL-GroES system forms a nano-cage that allows encapsulation of the non-native substrate proteins and provides a physical environment optimized to promote and accelerate protein folding. This Protochlamydia amoebophila (strain UWE25) protein is Chaperonin GroEL 1.